A 369-amino-acid polypeptide reads, in one-letter code: 3',5'-cyclic-nucleotide phosphodiesterase 1 (369 aa).

It belongs to the cyclic nucleotide phosphodiesterase class-II family.

It carries out the reaction a nucleoside 3',5'-cyclic phosphate + H2O = a nucleoside 5'-phosphate + H(+). Functionally, controls the level of cAMP in yeast cells, together with the high-affinity cAMP phosphodiesterase (PDE2). This is 3',5'-cyclic-nucleotide phosphodiesterase 1 (PDE1) from Saccharomyces cerevisiae (strain ATCC 204508 / S288c) (Baker's yeast).